A 497-amino-acid chain; its full sequence is tRNA-2-methylthio-N(6)-dimethylallyladenosine synthase (497 aa).

An MTTase N-terminal domain is found at 44–161; sequence KKVFVTTQGC…LPELYDQSHQ (118 aa). Positions 53, 90, 124, 205, 209, and 212 each coordinate [4Fe-4S] cluster. In terms of domain architecture, Radical SAM core spans 191–423; sequence RVEGFKAFVS…QKVIIDSTLA (233 aa). The TRAM domain maps to 426–494; it reads HEMVGTTTRV…PHMVKGEIEA (69 aa).

This sequence belongs to the methylthiotransferase family. MiaB subfamily. As to quaternary structure, monomer. It depends on [4Fe-4S] cluster as a cofactor.

Its subcellular location is the cytoplasm. It carries out the reaction N(6)-dimethylallyladenosine(37) in tRNA + (sulfur carrier)-SH + AH2 + 2 S-adenosyl-L-methionine = 2-methylsulfanyl-N(6)-dimethylallyladenosine(37) in tRNA + (sulfur carrier)-H + 5'-deoxyadenosine + L-methionine + A + S-adenosyl-L-homocysteine + 2 H(+). Catalyzes the methylthiolation of N6-(dimethylallyl)adenosine (i(6)A), leading to the formation of 2-methylthio-N6-(dimethylallyl)adenosine (ms(2)i(6)A) at position 37 in tRNAs that read codons beginning with uridine. The protein is tRNA-2-methylthio-N(6)-dimethylallyladenosine synthase of Psychrobacter cryohalolentis (strain ATCC BAA-1226 / DSM 17306 / VKM B-2378 / K5).